The sequence spans 401 residues: Argininosuccinate synthase (401 aa).

8 to 16 contacts ATP; sequence AYSGGLDTS. Y87 serves as a coordination point for L-citrulline. G117 contributes to the ATP binding site. L-aspartate is bound by residues T119, N123, and D124. N123 serves as a coordination point for L-citrulline. L-citrulline-binding residues include R127, S175, E259, and Y271.

This sequence belongs to the argininosuccinate synthase family. Type 1 subfamily. Homotetramer.

Its subcellular location is the cytoplasm. The enzyme catalyses L-citrulline + L-aspartate + ATP = 2-(N(omega)-L-arginino)succinate + AMP + diphosphate + H(+). Its pathway is amino-acid biosynthesis; L-arginine biosynthesis; L-arginine from L-ornithine and carbamoyl phosphate: step 2/3. This Arthrobacter sp. (strain FB24) protein is Argininosuccinate synthase.